A 205-amino-acid chain; its full sequence is Holliday junction branch migration complex subunit RuvA (205 aa).

A domain I region spans residues 1-64 (MIGRLSGILV…EDAQLLYGFI (64 aa)). Residues 65 to 143 (TKQERALFRL…SLLEASAGSE (79 aa)) form a domain II region. A flexible linker region spans residues 144 to 156 (REFMLQSNYTPAA). The domain III stretch occupies residues 157 to 205 (AVDSAEEDAISALLSLGYKPAQASKSVSAAFKEGMSSETLIKAALKSML).

Belongs to the RuvA family. As to quaternary structure, homotetramer. Forms an RuvA(8)-RuvB(12)-Holliday junction (HJ) complex. HJ DNA is sandwiched between 2 RuvA tetramers; dsDNA enters through RuvA and exits via RuvB. An RuvB hexamer assembles on each DNA strand where it exits the tetramer. Each RuvB hexamer is contacted by two RuvA subunits (via domain III) on 2 adjacent RuvB subunits; this complex drives branch migration. In the full resolvosome a probable DNA-RuvA(4)-RuvB(12)-RuvC(2) complex forms which resolves the HJ.

The protein resides in the cytoplasm. Functionally, the RuvA-RuvB-RuvC complex processes Holliday junction (HJ) DNA during genetic recombination and DNA repair, while the RuvA-RuvB complex plays an important role in the rescue of blocked DNA replication forks via replication fork reversal (RFR). RuvA specifically binds to HJ cruciform DNA, conferring on it an open structure. The RuvB hexamer acts as an ATP-dependent pump, pulling dsDNA into and through the RuvAB complex. HJ branch migration allows RuvC to scan DNA until it finds its consensus sequence, where it cleaves and resolves the cruciform DNA. The polypeptide is Holliday junction branch migration complex subunit RuvA (Shewanella frigidimarina (strain NCIMB 400)).